The sequence spans 137 residues: Large ribosomal subunit protein uL16 (137 aa).

The protein belongs to the universal ribosomal protein uL16 family. In terms of assembly, part of the 50S ribosomal subunit.

Its function is as follows. Binds 23S rRNA and is also seen to make contacts with the A and possibly P site tRNAs. The sequence is that of Large ribosomal subunit protein uL16 from Tolumonas auensis (strain DSM 9187 / NBRC 110442 / TA 4).